Here is a 381-residue protein sequence, read N- to C-terminus: rRNA adenine N-6-methyltransferase (381 aa).

Positions Met1–His19 are enriched in basic and acidic residues. A disordered region spans residues Met1 to Asn42. Residues Asn42, Leu44, Gly69, Glu90, Asp115, and Ala131 each contribute to the S-adenosyl-L-methionine site. Residues Arg282–Arg381 are disordered. Positions Gly301–Gly358 are enriched in basic and acidic residues. A compositionally biased stretch (gly residues) spans Arg359–Arg381.

The protein belongs to the class I-like SAM-binding methyltransferase superfamily. rRNA adenine N(6)-methyltransferase family.

The enzyme catalyses adenosine(2085) in 23S rRNA + 2 S-adenosyl-L-methionine = N(6)-dimethyladenosine(2085) in 23S rRNA + 2 S-adenosyl-L-homocysteine + 2 H(+). In terms of biological role, this protein produces a dimethylation of the adenine residue at position 2085 in 23S rRNA, resulting in reduced affinity between ribosomes and macrolide-lincosamide-streptogramin B antibiotics. In Saccharopolyspora erythraea (strain ATCC 11635 / DSM 40517 / JCM 4748 / NBRC 13426 / NCIMB 8594 / NRRL 2338), this protein is rRNA adenine N-6-methyltransferase (ermE).